The following is a 396-amino-acid chain: MSVRLVLAKGREKSLLRRHPWVFSGAVARMEGKAAPGETIDIVDHQGKWLARAALSPASQIRARVWTFDPNETIDIAFFTRRLQQAQQWRDWLAKKDGLDSYRLIAGESDGLPGVTIDRFGNFLVLQLLSAGAEYQRPALVSALQALYPECAIYDRSDVAVRKKEGMELAQGPVSGELPPDLLAIEEHGMKLLVDIKGGHKTGYYLDQRDSRFATRRYVEDKRVLNCFSYTGGFAVSALMGGCRQVISVDTSQDALDVAKQNVELNKLDLSKAEFVRDDVFKLLRKYRDQGETFDVIVMDPPKFVENKSQLQGACRGYKDINMLAIQLLNPGGILLTFSCSGLMTTDLFQKIVADAATDAGRDVQFIEQFRQAADHPVIASYPEGLYLKGFACHVM.

Positions 2–81 (SVRLVLAKGR…ETIDIAFFTR (80 aa)) constitute a PUA domain.

Belongs to the methyltransferase superfamily. RlmI family.

The protein resides in the cytoplasm. It carries out the reaction cytidine(1962) in 23S rRNA + S-adenosyl-L-methionine = 5-methylcytidine(1962) in 23S rRNA + S-adenosyl-L-homocysteine + H(+). Functionally, specifically methylates the cytosine at position 1962 (m5C1962) of 23S rRNA. This chain is Ribosomal RNA large subunit methyltransferase I, found in Cronobacter sakazakii (strain ATCC BAA-894) (Enterobacter sakazakii).